A 236-amino-acid chain; its full sequence is THO complex subunit 7B (236 aa).

Positions E99–N228 form a coiled coil.

The protein belongs to the THOC7 family. As to quaternary structure, component of the THO complex, which is composed of THO1, THO2, THO3, THO5, THO6 and THO7.

The protein resides in the nucleus. Its function is as follows. Acts as a component of the THO subcomplex of the TREX complex which is thought to couple mRNA transcription, processing and nuclear export. This chain is THO complex subunit 7B (THO7B), found in Arabidopsis thaliana (Mouse-ear cress).